A 102-amino-acid polypeptide reads, in one-letter code: Large ribosomal subunit protein bL21 (102 aa).

This sequence belongs to the bacterial ribosomal protein bL21 family. In terms of assembly, part of the 50S ribosomal subunit. Contacts protein L20.

This protein binds to 23S rRNA in the presence of protein L20. The chain is Large ribosomal subunit protein bL21 from Marinomonas sp. (strain MWYL1).